The chain runs to 410 residues: 2-oxoglutarate-dependent dioxygenase AOP3 (410 aa).

Residues 258-355 (GNASVGAKEA…RYAAALFSYP (98 aa)) enclose the Fe2OG dioxygenase domain. Residues histidine 278, aspartate 280, and histidine 335 each contribute to the Fe cation site. Arginine 346 provides a ligand contact to 2-oxoglutarate.

Belongs to the iron/ascorbate-dependent oxidoreductase family. Fe(2+) is required as a cofactor.

In terms of biological role, 2-oxoglutarate-dependent dioxygenase involved in glucosinolates biosynthesis. Catalyzes the conversion of methylsulfinylalkyl glucosinolates to hydroxyalkyl glucosinolates. The sequence is that of 2-oxoglutarate-dependent dioxygenase AOP3 (AOP3) from Arabidopsis thaliana (Mouse-ear cress).